The following is a 350-amino-acid chain: Serine-threonine kinase receptor-associated protein (350 aa).

7 WD repeats span residues 12 to 56, 57 to 96, 98 to 137, 141 to 179, 180 to 212, 221 to 262, and 263 to 302; these read GHTR…GTFL, GHKG…ELMT, AHKH…AEPK, GHTS…EVKS, LNFN…HSAV, EAPA…ESYK, and GHFG…TYGL. A phosphoserine mark is found at Ser312, Ser335, and Ser338. The tract at residues 327–350 is disordered; sequence EEELEEIASENSDSIYSSTPEVKA. Polar residues predominate over residues 337-350; that stretch reads NSDSIYSSTPEVKA. Residue Tyr342 is modified to Phosphotyrosine.

Belongs to the WD repeat STRAP family. As to quaternary structure, part of the core SMN complex that contains SMN1, GEMIN2/SIP1, DDX20/GEMIN3, GEMIN4, GEMIN5, GEMIN6, GEMIN7, GEMIN8 and STRAP/UNRIP. Part of the SMN-Sm complex that contains SMN1, GEMIN2/SIP1, DDX20/GEMIN3, GEMIN4, GEMIN5, GEMIN6, GEMIN7, GEMIN8, STRAP/UNRIP and the Sm proteins SNRPB, SNRPD1, SNRPD2, SNRPD3, SNRPE, SNRPF and SNRPG. Interacts directly with GEMIN6 and GEMIN7. Associates with the SMN complex in the cytoplasm but not in the nucleus. Also interacts with CSDE1/UNR and MAWBP. Interacts with PDPK1. Interacts with TRIM48.

The protein localises to the cytoplasm. The protein resides in the nucleus. The SMN complex catalyzes the assembly of small nuclear ribonucleoproteins (snRNPs), the building blocks of the spliceosome, and thereby plays an important role in the splicing of cellular pre-mRNAs. Most spliceosomal snRNPs contain a common set of Sm proteins SNRPB, SNRPD1, SNRPD2, SNRPD3, SNRPE, SNRPF and SNRPG that assemble in a heptameric protein ring on the Sm site of the small nuclear RNA to form the core snRNP (Sm core). In the cytosol, the Sm proteins SNRPD1, SNRPD2, SNRPE, SNRPF and SNRPG are trapped in an inactive 6S pICln-Sm complex by the chaperone CLNS1A that controls the assembly of the core snRNP. To assemble core snRNPs, the SMN complex accepts the trapped 5Sm proteins from CLNS1A forming an intermediate. Binding of snRNA inside 5Sm triggers eviction of the SMN complex, thereby allowing binding of SNRPD3 and SNRPB to complete assembly of the core snRNP. STRAP plays a role in the cellular distribution of the SMN complex. Negatively regulates TGF-beta signaling but positively regulates the PDPK1 kinase activity by enhancing its autophosphorylation and by significantly reducing the association of PDPK1 with 14-3-3 protein. The polypeptide is Serine-threonine kinase receptor-associated protein (STRAP) (Bos taurus (Bovine)).